Consider the following 550-residue polypeptide: Cytochrome P450 monooxygenase FFUJ_09176 (550 aa).

Positions M1–S31 are cleaved as a signal peptide. Over residues F430–S441 the composition is skewed to basic and acidic residues. The tract at residues F430 to V451 is disordered. Residue C466 coordinates heme.

It belongs to the cytochrome P450 family.

Functionally, cytochrome P450 monooxygenase; part of the DMATS1 gene cluster that mediates the biosynthesis of a reversely N-prenylated monomeric L-tryptophan (r-N-DMAT). Seems not to contribute to the final DMATS1 product. The protein is Cytochrome P450 monooxygenase FFUJ_09176 of Gibberella fujikuroi (strain CBS 195.34 / IMI 58289 / NRRL A-6831) (Bakanae and foot rot disease fungus).